A 395-amino-acid chain; its full sequence is Glyceraldehyde-3-phosphate dehydrogenase, testis-specific (395 aa).

A testis-specific N-terminal extension region spans residues 1–60; the sequence is MSKRDIVLTNVTVVQLLRQPCPEPRVEAEPEPPAQPQPQPEPIKEEVPPPPPPPPAPKKV. The segment at 19–59 is disordered; it reads QPCPEPRVEAEPEPPAQPQPQPEPIKEEVPPPPPPPPAPKK. Composition is skewed to pro residues over residues 31–41 and 48–57; these read EPPAQPQPQPE and PPPPPPPPAP. Residues 72 to 73, Asp-93, and Lys-138 contribute to the NAD(+) site; that span reads RI. D-glyceraldehyde 3-phosphate-binding positions include 210 to 212, Thr-241, 270 to 271, and Arg-293; these read SCT and TG. Residue Cys-211 is the Nucleophile of the active site. Asn-375 is a binding site for NAD(+).

This sequence belongs to the glyceraldehyde-3-phosphate dehydrogenase family. Homotetramer.

It localises to the cytoplasm. It carries out the reaction D-glyceraldehyde 3-phosphate + phosphate + NAD(+) = (2R)-3-phospho-glyceroyl phosphate + NADH + H(+). The protein operates within carbohydrate degradation; glycolysis; pyruvate from D-glyceraldehyde 3-phosphate: step 1/5. In terms of biological role, may play an important role in regulating the switch between different pathways for energy production during spermiogenesis and in the spermatozoon. Required for sperm motility and male fertility. This is Glyceraldehyde-3-phosphate dehydrogenase, testis-specific (GAPDHS) from Bos taurus (Bovine).